Here is a 263-residue protein sequence, read N- to C-terminus: Acetylglutamate kinase (263 aa).

Substrate contacts are provided by residues 48 to 49 (GG), Arg-70, and Asn-162.

Belongs to the acetylglutamate kinase family. ArgB subfamily.

Its subcellular location is the cytoplasm. It carries out the reaction N-acetyl-L-glutamate + ATP = N-acetyl-L-glutamyl 5-phosphate + ADP. It participates in amino-acid biosynthesis; L-arginine biosynthesis; N(2)-acetyl-L-ornithine from L-glutamate: step 2/4. In terms of biological role, catalyzes the ATP-dependent phosphorylation of N-acetyl-L-glutamate. The sequence is that of Acetylglutamate kinase from Vibrio campbellii (strain ATCC BAA-1116).